The following is a 55-amino-acid chain: Large ribosomal subunit protein bL33 (55 aa).

The protein belongs to the bacterial ribosomal protein bL33 family.

This is Large ribosomal subunit protein bL33 from Xanthomonas axonopodis pv. citri (strain 306).